The primary structure comprises 237 residues: Speedy protein E4 (237 aa).

Residues 1–61 (MASGQARPPF…KRKSEWSDES (61 aa)) form a disordered region.

Belongs to the Speedy/Ringo family. As to expression, predominantly expressed in testis.

This is Speedy protein E4 from Homo sapiens (Human).